Consider the following 475-residue polypeptide: Glycogen synthase (475 aa).

Lys-15 lines the ADP-alpha-D-glucose pocket.

It belongs to the glycosyltransferase 1 family. Bacterial/plant glycogen synthase subfamily.

It carries out the reaction [(1-&gt;4)-alpha-D-glucosyl](n) + ADP-alpha-D-glucose = [(1-&gt;4)-alpha-D-glucosyl](n+1) + ADP + H(+). It participates in glycan biosynthesis; glycogen biosynthesis. Synthesizes alpha-1,4-glucan chains using ADP-glucose. This chain is Glycogen synthase, found in Alkaliphilus metalliredigens (strain QYMF).